The primary structure comprises 83 residues: Large ribosomal subunit protein bL31B (83 aa).

It belongs to the bacterial ribosomal protein bL31 family. Type B subfamily. As to quaternary structure, part of the 50S ribosomal subunit.

The chain is Large ribosomal subunit protein bL31B from Lactobacillus johnsonii (strain CNCM I-12250 / La1 / NCC 533).